The chain runs to 82 residues: Sec-independent protein translocase protein TatA (82 aa).

The helical transmembrane segment at 1-21 (MGGISIWQLLIIAVIVVLLFG) threads the bilayer.

It belongs to the TatA/E family. In terms of assembly, the Tat system comprises two distinct complexes: a TatABC complex, containing multiple copies of TatA, TatB and TatC subunits, and a separate TatA complex, containing only TatA subunits. Substrates initially bind to the TatABC complex, which probably triggers association of the separate TatA complex to form the active translocon.

It is found in the cell inner membrane. In terms of biological role, part of the twin-arginine translocation (Tat) system that transports large folded proteins containing a characteristic twin-arginine motif in their signal peptide across membranes. TatA could form the protein-conducting channel of the Tat system. In Vibrio cholerae serotype O1 (strain ATCC 39315 / El Tor Inaba N16961), this protein is Sec-independent protein translocase protein TatA.